A 226-amino-acid chain; its full sequence is Ribonuclease 3 (226 aa).

Residues 7–134 (KQNLKKKYGI…FNGALFLDQG (128 aa)) form the RNase III domain. E47 contacts Mg(2+). D51 is a catalytic residue. Mg(2+)-binding residues include D120 and E123. E123 is an active-site residue. The region spanning 160-226 (DYKTELQERL…AAQAALDKNK (67 aa)) is the DRBM domain. The segment at 201-226 (KVSEGQGRNKKAAEQQAAQAALDKNK) is disordered. Positions 214–226 (EQQAAQAALDKNK) are enriched in low complexity.

It belongs to the ribonuclease III family. Homodimer. It depends on Mg(2+) as a cofactor.

The protein localises to the cytoplasm. The catalysed reaction is Endonucleolytic cleavage to 5'-phosphomonoester.. Its function is as follows. Digests double-stranded RNA. Involved in the processing of primary rRNA transcript to yield the immediate precursors to the large and small rRNAs (23S and 16S). Processes some mRNAs, and tRNAs when they are encoded in the rRNA operon. Processes pre-crRNA and tracrRNA of type II CRISPR loci if present in the organism. The polypeptide is Ribonuclease 3 (Lactobacillus johnsonii (strain CNCM I-12250 / La1 / NCC 533)).